We begin with the raw amino-acid sequence, 264 residues long: Diphthine synthase (264 aa).

S-adenosyl-L-methionine contacts are provided by residues leucine 10, aspartate 87, valine 90, 115 to 116 (SI), leucine 166, alanine 209, and histidine 234.

It belongs to the diphthine synthase family. Homodimer.

The catalysed reaction is 2-[(3S)-amino-3-carboxypropyl]-L-histidyl-[translation elongation factor 2] + 3 S-adenosyl-L-methionine = diphthine-[translation elongation factor 2] + 3 S-adenosyl-L-homocysteine + 3 H(+). It participates in protein modification; peptidyl-diphthamide biosynthesis. Functionally, S-adenosyl-L-methionine-dependent methyltransferase that catalyzes the trimethylation of the amino group of the modified target histidine residue in translation elongation factor 2 (EF-2), to form an intermediate called diphthine. The three successive methylation reactions represent the second step of diphthamide biosynthesis. In Thermococcus kodakarensis (strain ATCC BAA-918 / JCM 12380 / KOD1) (Pyrococcus kodakaraensis (strain KOD1)), this protein is Diphthine synthase.